Consider the following 314-residue polypeptide: Ribosomal RNA small subunit methyltransferase H (314 aa).

Residues 34-36, Asp-53, Phe-82, Asp-103, and Gln-110 each bind S-adenosyl-L-methionine; that span reads GGH.

The protein belongs to the methyltransferase superfamily. RsmH family.

The protein resides in the cytoplasm. The enzyme catalyses cytidine(1402) in 16S rRNA + S-adenosyl-L-methionine = N(4)-methylcytidine(1402) in 16S rRNA + S-adenosyl-L-homocysteine + H(+). Functionally, specifically methylates the N4 position of cytidine in position 1402 (C1402) of 16S rRNA. In Limosilactobacillus fermentum (strain NBRC 3956 / LMG 18251) (Lactobacillus fermentum), this protein is Ribosomal RNA small subunit methyltransferase H.